The sequence spans 21 residues: Dahlein-5.6 (21 aa).

Expressed by the skin dorsal glands.

It localises to the secreted. Its function is as follows. Has no antimicrobial activity. Strongly inhibits the formation of NO by neuronal nitric oxide synthase at micromolar concentrations. The polypeptide is Dahlein-5.6 (Ranoidea dahlii (Dahl's aquatic frog)).